The primary structure comprises 615 residues: Sodium-dependent noradrenaline transporter (615 aa).

The disordered stretch occupies residues 1-28; the sequence is MLLARMNPQVQPENGGAGPGSEQPPRKR. Over 1 to 60 the chain is Cytoplasmic; that stretch reads MLLARMNPQVQPENGGAGPGSEQPPRKRKEVLVVKERNGVQCLLASRDGDEQPRETWGKK. Residues 61 to 86 traverse the membrane as a helical segment; that stretch reads IDFLLSVVGFAVDLANVWRFPYLCYK. Residues Gly-69, Ala-71, and Val-72 each coordinate Na(+). Residue Asp-73 coordinates (R)-noradrenaline. A dopamine-binding site is contributed by Asp-73. Asn-76 is a Na(+) binding site. (R)-noradrenaline is bound by residues Tyr-85 and Lys-86. Residues 87-90 are Extracellular-facing; the sequence is NGGG. The helical transmembrane segment at 91–114 threads the bilayer; sequence AFLIPYTLFLIIAGMPLFYMELAL. The Cytoplasmic portion of the chain corresponds to 115–133; that stretch reads GQYNREGAATVWKICPFFK. A helical membrane pass occupies residues 134–164; the sequence is GVGYAVILIALYVGFYYNVIIAWSLYYLFSS. Residues Ala-143 and Gly-147 each contribute to the (R)-noradrenaline site. A dopamine-binding site is contributed by Ala-143. Residues 165–231 lie on the Extracellular side of the membrane; the sequence is FTPTLPWTDC…SSGIHDIGLP (67 aa). Cys-174 and Cys-183 are disulfide-bonded. N-linked (GlcNAc...) asparagine glycosylation is found at Asn-182, Asn-190, and Asn-196. The chain crosses the membrane as a helical span at residues 232-252; sequence QWQLLLCLIIVVIVLFFSLWK. The Cytoplasmic portion of the chain corresponds to 253-255; it reads GVK. Residues 256–280 traverse the membrane as a helical segment; that stretch reads TSGKVVWITATLPYLVLFVLLVHGI. The Extracellular segment spans residues 281-304; that stretch reads TLPGASNGINAYLHIDFYRLKEAT. Residues 305–330 traverse the membrane as a helical segment; sequence VWIDAATQIFFSLGAGFGVLIAFASY. Phe-315 is a (R)-noradrenaline binding site. Phe-315 is a binding site for dopamine. Position 316 (Ser-316) interacts with Na(+). Over 331–336 the chain is Cytoplasmic; that stretch reads NKFDNN. The helical transmembrane segment at 337–360 threads the bilayer; it reads CYRDALLTSTINCVTSFISGFAIF. Asn-348 serves as a coordination point for Na(+). The Extracellular segment spans residues 361-400; the sequence is SILGYMAHEHKVNIEDVATEGAGLVFILYPEAISTLSGST. Glu-380 is a (R)-noradrenaline binding site. Residue Glu-380 coordinates dopamine. The helical transmembrane segment at 401–426 threads the bilayer; the sequence is FWAIVFFIMLLALGIDSSMGGMEAVI. Residues Asp-416 and Ser-417 each coordinate Na(+). Over 427 to 441 the chain is Cytoplasmic; sequence TGLADDFQVLKRHRK. Residues 442–462 traverse the membrane as a helical segment; it reads LFTFAVSFGTFLLALFCITKG. Position 463 (Gly-463) is a topological domain, extracellular. The chain crosses the membrane as a helical span at residues 464–490; it reads IYVLTLLDTFAAGTSILFAVLMEAIGV. Residues 491–520 lie on the Cytoplasmic side of the membrane; the sequence is SWFYGVDRFSNDIQQMMGFKPGLYWRLCWK. A helical transmembrane segment spans residues 521–543; that stretch reads FVSPAFLLFVVIVSIINFKPLTY. The Extracellular segment spans residues 544 to 546; it reads DDY. The helical transmembrane segment at 547 to 567 threads the bilayer; that stretch reads IFPLWANWVGWGIAGSSMVLV. Over 568-615 the chain is Cytoplasmic; that stretch reads PAYIVYKFFSTRGSIRERLAYGITPASEHHLVAQRDIRQFQLQHWLAI.

It belongs to the sodium:neurotransmitter symporter (SNF) (TC 2.A.22) family. SLC6A2 subfamily. Monomer. Can form homodimers in the cell membrane; homodimerization is mostly mediated by cholesterol and lipids, and regulates neurotransmitter transport activity. Interacts with PRKCABP. Palmitoylated. Palmitoylation regulates protein levels and neurotransmitter transport.

It is found in the cell membrane. The protein localises to the cell projection. Its subcellular location is the axon. It localises to the synapse. The protein resides in the synaptosome. The catalysed reaction is (R)-noradrenaline(out) + chloride(out) + Na(+)(out) = (R)-noradrenaline(in) + chloride(in) + Na(+)(in). The enzyme catalyses dopamine(out) + chloride(out) + Na(+)(out) = dopamine(in) + chloride(in) + Na(+)(in). It catalyses the reaction dopamine(out) + chloride(out) + 2 Na(+)(out) = dopamine(in) + chloride(in) + 2 Na(+)(in). Inhibited by nisoxetine, oxaprotiline and desipramin. Functionally, mediates sodium- and chloride-dependent transport of norepinephrine (also known as noradrenaline), the primary signaling neurotransmitter in the autonomic sympathetic nervous system. Is responsible for norepinephrine re-uptake and clearance from the synaptic cleft, thus playing a crucial role in norepinephrine inactivation and homeostasis. Can also mediate sodium- and chloride-dependent transport of dopamine. The protein is Sodium-dependent noradrenaline transporter (SLC6A2) of Bos taurus (Bovine).